Consider the following 460-residue polypeptide: tRNA(Ile)-lysidine synthase (460 aa).

37 to 42 (SGGADS) contacts ATP.

It belongs to the tRNA(Ile)-lysidine synthase family.

The protein localises to the cytoplasm. The catalysed reaction is cytidine(34) in tRNA(Ile2) + L-lysine + ATP = lysidine(34) in tRNA(Ile2) + AMP + diphosphate + H(+). In terms of biological role, ligates lysine onto the cytidine present at position 34 of the AUA codon-specific tRNA(Ile) that contains the anticodon CAU, in an ATP-dependent manner. Cytidine is converted to lysidine, thus changing the amino acid specificity of the tRNA from methionine to isoleucine. The protein is tRNA(Ile)-lysidine synthase of Treponema denticola (strain ATCC 35405 / DSM 14222 / CIP 103919 / JCM 8153 / KCTC 15104).